Consider the following 320-residue polypeptide: Epoxidase atD (320 aa).

N-linked (GlcNAc...) asparagine glycosylation is found at N245 and N299.

It functions in the pathway secondary metabolite biosynthesis. Its function is as follows. Epoxidase; part of the gene cluster that mediates the biosynthesis of terreic acid, a quinone epoxide inhibitor of Bruton's tyrosine kinase. The first step of the pathway is the synthesis of 6-methylsalicylic acid (6-MSA) by the 6-methylsalicylic acid synthase atX. In the biosynthesis of 6-MSA, atX utilizes one acetyl-CoA and three malonyl-CoAs as its substrates and catalyzes a series of programmed reactions including Claisen condensation, reduction, aldol cyclization, and the hydrolytic cleavage that yields 6-MSA. The 6-methylsalicylate 1-monooxygenase atA then catalyzes the decarboxylative hydroxylation of 6-MSA to 3-methylcatechol. The next step is the conversion of 3-methylcatechol to 3-methyl-1,2,4-benzenetriol by cytochrome P450 monooxygenase atE, which is enhanced by cytochrome P450 monooxygenase atG. Then, the epoxidase atD catalyzes the epoxidation and hydroxyl oxidation of 3-methyl-1,2,4-benzenetriol to terremutin. Lastly, GMC oxidoreductase atC oxidizes terremutin to terreic acid. The protein is Epoxidase atD of Aspergillus terreus (strain NIH 2624 / FGSC A1156).